The primary structure comprises 648 residues: Threonine--tRNA ligase (648 aa).

The 63-residue stretch at 1-63 (MAQISLTFPD…TQDAAIAIHT (63 aa)) folds into the TGS domain. The tract at residues 247 to 544 (DHRKLGREMN…LIEEHAGKLP (298 aa)) is catalytic. Zn(2+) contacts are provided by Cys344, His395, and His521.

Belongs to the class-II aminoacyl-tRNA synthetase family. In terms of assembly, homodimer. Zn(2+) serves as cofactor.

The protein localises to the cytoplasm. The enzyme catalyses tRNA(Thr) + L-threonine + ATP = L-threonyl-tRNA(Thr) + AMP + diphosphate + H(+). Catalyzes the attachment of threonine to tRNA(Thr) in a two-step reaction: L-threonine is first activated by ATP to form Thr-AMP and then transferred to the acceptor end of tRNA(Thr). Also edits incorrectly charged L-seryl-tRNA(Thr). The chain is Threonine--tRNA ligase from Ruegeria sp. (strain TM1040) (Silicibacter sp.).